The sequence spans 1040 residues: Multidrug resistance protein MdtB (1040 aa).

The next 12 membrane-spanning stretches (helical) occupy residues 25–45, 347–367, 369–389, 396–416, 440–460, 472–492, 537–557, 863–883, 888–908, 910–930, 968–988, and 998–1018; these read LLMA…PVAA, LMLA…NIPA, IIPG…MVFL, LTLM…IVVI, IGFT…PLLF, FAVT…TLTP, WLTL…WIVI, LGST…VLGV, FIHP…ALLA, IIAG…LIGI, ILMT…STGV, and IAMV…TPVI.

This sequence belongs to the resistance-nodulation-cell division (RND) (TC 2.A.6) family. MdtB subfamily. Part of a tripartite efflux system composed of MdtA, MdtB and MdtC. MdtB forms a heteromultimer with MdtC.

Its subcellular location is the cell inner membrane. In Salmonella paratyphi B (strain ATCC BAA-1250 / SPB7), this protein is Multidrug resistance protein MdtB.